We begin with the raw amino-acid sequence, 340 residues long: Pre-mRNA-splicing factor cwf17 (340 aa).

WD repeat units follow at residues 48–87, 91–130, 133–173, 175–214, 217–256, 267–306, and 308–339; these read GHTAEVLVARFDPSGSYFASGGMDRQILLWNVFGDVKNYG, GCKGAITDLQWSRDSRVVYCSSSDTHLMSWDAVSGQKIRK, GHAG…CIKT, EEKYPLTAVAIAQQGTQVFIGGIDGAIKIWDLRNNHCSHV, GHKDIITSLAISKDGSSLLSNSMDNTVRIFDVKPFASAQR, GQEHNLLGVAWSRNSRFVGAGSSDKNVYVWSATGDLRYVL, and GHEGSVNHVDFHPHQDIILSCSSDRTIFLGEL.

As to quaternary structure, belongs to the 40S cdc5-associated complex (or cwf complex), a spliceosome sub-complex reminiscent of a late-stage spliceosome composed of the U2, U5 and U6 snRNAs and at least brr2, cdc5, cwf2/prp3, cwf3/syf1, cwf4/syf3, cwf5/ecm2, spp42/cwf6, cwf7/spf27, cwf8, cwf9, cwf10, cwf11, cwf12, prp45/cwf13, cwf14, cwf15, cwf16, cwf17, cwf18, cwf19, cwf20, cwf21, cwf22, cwf23, cwf24, cwf25, cwf26, cyp7/cwf27, cwf28, cwf29/ist3, lea1, msl1, prp5/cwf1, prp10, prp12/sap130, prp17, prp22, sap61, sap62, sap114, sap145, slu7, smb1, smd1, smd3, smf1, smg1 and syf2.

Its subcellular location is the nucleus. In terms of biological role, involved in mRNA splicing where it associates with cdc5 and the other cwf proteins as part of the spliceosome. This Schizosaccharomyces pombe (strain 972 / ATCC 24843) (Fission yeast) protein is Pre-mRNA-splicing factor cwf17 (cwf17).